A 350-amino-acid chain; its full sequence is MALVQQSSPHARRARPTSRVMLWVILAALPGLLAQTLFFGWGNLINVVWCIALALGSEAAFLKLRGKPVAFFLRDNTAAVTGLLLGLSLPQFTPWWVSGIAVVSAIVVAKQLYGGLGSNPFNPAMVGYALALISFPVAMTTNWAEAATLWGGAPGFGETLAKIFTGGQTAVDGWTMATPLDEYKHKIASHTSVEVLGHPTFGDLIARGWEWVNLAFLAGGVLLIALRIITWHIPVAFLAGIAAMSLAFGSNADQYAPLQLHLLAGGTMLGAFFIATDPVSAATSHQGKLIYGAGIGVLVYLIRSWGNYPDAVAFSVLLMNFAVPFIDHYTPPRTYGHHKARRGVPGRSGG.

4 helical membrane passes run valine 20–glycine 40, glycine 42–leucine 62, leucine 89–alanine 109, and proline 120–threonine 140. Position 178 is an FMN phosphoryl threonine (threonine 178). Transmembrane regions (helical) follow at residues leucine 204–isoleucine 224, isoleucine 228–phenylalanine 248, tyrosine 255–alanine 275, alanine 282–isoleucine 302, and glycine 306–isoleucine 326.

The protein belongs to the NqrB/RnfD family. As to quaternary structure, the complex is composed of six subunits: RnfA, RnfB, RnfC, RnfD, RnfE and RnfG. The cofactor is FMN.

The protein localises to the cell inner membrane. Functionally, part of a membrane-bound complex that couples electron transfer with translocation of ions across the membrane. The sequence is that of Ion-translocating oxidoreductase complex subunit D from Marinobacter nauticus (strain ATCC 700491 / DSM 11845 / VT8) (Marinobacter aquaeolei).